Consider the following 96-residue polypeptide: Exodeoxyribonuclease 7 small subunit (96 aa).

Positions 73 to 96 (RAPEQSAANDVSAPGSAEEHDHGR) are disordered.

It belongs to the XseB family. As to quaternary structure, heterooligomer composed of large and small subunits.

Its subcellular location is the cytoplasm. The enzyme catalyses Exonucleolytic cleavage in either 5'- to 3'- or 3'- to 5'-direction to yield nucleoside 5'-phosphates.. Functionally, bidirectionally degrades single-stranded DNA into large acid-insoluble oligonucleotides, which are then degraded further into small acid-soluble oligonucleotides. In Acidothermus cellulolyticus (strain ATCC 43068 / DSM 8971 / 11B), this protein is Exodeoxyribonuclease 7 small subunit.